The primary structure comprises 273 residues: 4-hydroxy-tetrahydrodipicolinate reductase (273 aa).

Residues 12-17 and glutamate 38 each bind NAD(+); that span reads GAGGRM. Position 39 (arginine 39) interacts with NADP(+). NAD(+)-binding positions include 102-104 and 126-129; these read GTT and AANF. Catalysis depends on histidine 159, which acts as the Proton donor/acceptor. Residue histidine 160 coordinates (S)-2,3,4,5-tetrahydrodipicolinate. The Proton donor role is filled by lysine 163. 169 to 170 provides a ligand contact to (S)-2,3,4,5-tetrahydrodipicolinate; the sequence is GT.

Belongs to the DapB family. In terms of assembly, homotetramer.

It is found in the cytoplasm. It catalyses the reaction (S)-2,3,4,5-tetrahydrodipicolinate + NAD(+) + H2O = (2S,4S)-4-hydroxy-2,3,4,5-tetrahydrodipicolinate + NADH + H(+). The catalysed reaction is (S)-2,3,4,5-tetrahydrodipicolinate + NADP(+) + H2O = (2S,4S)-4-hydroxy-2,3,4,5-tetrahydrodipicolinate + NADPH + H(+). It functions in the pathway amino-acid biosynthesis; L-lysine biosynthesis via DAP pathway; (S)-tetrahydrodipicolinate from L-aspartate: step 4/4. Its function is as follows. Catalyzes the conversion of 4-hydroxy-tetrahydrodipicolinate (HTPA) to tetrahydrodipicolinate. The sequence is that of 4-hydroxy-tetrahydrodipicolinate reductase from Photorhabdus laumondii subsp. laumondii (strain DSM 15139 / CIP 105565 / TT01) (Photorhabdus luminescens subsp. laumondii).